Reading from the N-terminus, the 375-residue chain is Histidine biosynthesis bifunctional protein HisB (375 aa).

The segment at 1–168 (MTPILFVDRD…GIAHELADAP (168 aa)) is histidinol-phosphatase. The active-site Nucleophile is Asp-8. Residues Asp-8, Asp-10, and Asp-128 each contribute to the Mg(2+) site. Asp-10 (proton donor) is an active-site residue. Residues 169–375 (RRAVVQRNTK…TALPSTKGAL (207 aa)) are imidazoleglycerol-phosphate dehydratase.

The protein in the N-terminal section; belongs to the histidinol-phosphatase family. This sequence in the C-terminal section; belongs to the imidazoleglycerol-phosphate dehydratase family. It depends on Mg(2+) as a cofactor.

The protein resides in the cytoplasm. The catalysed reaction is D-erythro-1-(imidazol-4-yl)glycerol 3-phosphate = 3-(imidazol-4-yl)-2-oxopropyl phosphate + H2O. The enzyme catalyses L-histidinol phosphate + H2O = L-histidinol + phosphate. It functions in the pathway amino-acid biosynthesis; L-histidine biosynthesis; L-histidine from 5-phospho-alpha-D-ribose 1-diphosphate: step 6/9. The protein operates within amino-acid biosynthesis; L-histidine biosynthesis; L-histidine from 5-phospho-alpha-D-ribose 1-diphosphate: step 8/9. The polypeptide is Histidine biosynthesis bifunctional protein HisB (Xanthomonas campestris pv. campestris (strain B100)).